Here is a 212-residue protein sequence, read N- to C-terminus: Lipid A acyltransferase PagP (212 aa).

The N-terminal stretch at 1–24 (MYLKRTLITLSLITLPIVPFLSYA) is a signal peptide. Residues 36–47 (NLAPVTVDSSDP) show a composition bias toward polar residues. The interval 36 to 56 (NLAPVTVDSSDPVSDKQGESW) is disordered. Residues His-84, Asp-127, and Ser-128 contribute to the active site.

It belongs to the lipid A palmitoyltransferase family. As to quaternary structure, homodimer.

It is found in the cell outer membrane. The enzyme catalyses a lipid A + a 1,2-diacyl-sn-glycero-3-phosphocholine = a hepta-acyl lipid A + a 2-acyl-sn-glycero-3-phosphocholine. It carries out the reaction a lipid IVA + a 1,2-diacyl-sn-glycero-3-phosphocholine = a lipid IVB + a 2-acyl-sn-glycero-3-phosphocholine. The catalysed reaction is a lipid IIA + a 1,2-diacyl-sn-glycero-3-phosphocholine = a lipid IIB + a 2-acyl-sn-glycero-3-phosphocholine. Its function is as follows. Transfers a fatty acid residue from the sn-1 position of a phospholipid to the N-linked hydroxyfatty acid chain on the proximal unit of lipid A or its precursors. In Pectobacterium carotovorum subsp. carotovorum (strain PC1), this protein is Lipid A acyltransferase PagP.